The following is a 397-amino-acid chain: Putative gustatory receptor 85a (397 aa).

Residues 1-56 lie on the Cytoplasmic side of the membrane; the sequence is MYSLIEAQLLGGKLVNRVMASLRRIIQRSLGYFCALNGILDFNTDIGTGNLRRYRV. The helical transmembrane segment at 57-77 threads the bilayer; the sequence is LFMYRLLHNFAVISLTLKFLF. Residues 78 to 90 are Extracellular-facing; that stretch reads DFTDHFKYIESST. Residues 91-111 traverse the membrane as a helical segment; sequence LITVNFFTYFTLVFFALLSSM. Over 112–151 the chain is Cytoplasmic; that stretch reads GSCYQWQNRILAVLKELKHQRDLSRHMGYRVPRSKQNSID. A helical membrane pass occupies residues 152-172; that stretch reads YLLFALTVLLILRLSIHLATF. Topologically, residues 173-186 are extracellular; it reads TLSARMGFNHPCNC. Residues 187 to 207 form a helical membrane-spanning segment; sequence FLPECMIFSMNYLLFAILAEI. Residues 208 to 268 lie on the Cytoplasmic side of the membrane; the sequence is TRCWWSLQSG…RYVTLAYMAR (61 aa). A helical transmembrane segment spans residues 269–289; that stretch reads NLWSGIVAGYLLVRFVIGNGL. The Extracellular portion of the chain corresponds to 290–293; sequence QDVE. A helical transmembrane segment spans residues 294-314; the sequence is LVYLVFSFITCIQPLMLSLLV. The Cytoplasmic segment spans residues 315 to 375; the sequence is NSMTSTTGSL…FRINRSLAFR (61 aa). Residues 376-396 form a helical membrane-spanning segment; the sequence is SASLILVHVLYMVQSDYISIT. A topological domain (extracellular) is located at residue Asn397.

Belongs to the insect chemoreceptor superfamily. Gustatory receptor (GR) family. Gr22e subfamily.

The protein localises to the cell membrane. Functionally, probable gustatory receptor which mediates acceptance or avoidance behavior, depending on its substrates. In Drosophila melanogaster (Fruit fly), this protein is Putative gustatory receptor 85a (Gr85a).